A 720-amino-acid polypeptide reads, in one-letter code: Polyribonucleotide nucleotidyltransferase (720 aa).

Asp-487 and Asp-493 together coordinate Mg(2+). The region spanning 554 to 613 is the KH domain; sequence PRIETFKIPTDKIREVIGTGGKVIREIVEKTGAKVNIEDDGTVKVASSDGEAMKAAIKWI. One can recognise an S1 motif domain in the interval 623-691; it reads GQIYDGTVVK…DRGKTRLSMK (69 aa). A disordered region spans residues 692–720; the sequence is AVDQTTGEDLEAKQKAEGGAEAPREAAGE. Basic and acidic residues predominate over residues 701–720; that stretch reads LEAKQKAEGGAEAPREAAGE.

The protein belongs to the polyribonucleotide nucleotidyltransferase family. Requires Mg(2+) as cofactor.

The protein resides in the cytoplasm. The catalysed reaction is RNA(n+1) + phosphate = RNA(n) + a ribonucleoside 5'-diphosphate. In terms of biological role, involved in mRNA degradation. Catalyzes the phosphorolysis of single-stranded polyribonucleotides processively in the 3'- to 5'-direction. The polypeptide is Polyribonucleotide nucleotidyltransferase (Bradyrhizobium sp. (strain BTAi1 / ATCC BAA-1182)).